Reading from the N-terminus, the 334-residue chain is Sensor protein BceS (334 aa).

Over 1 to 12 (MIKAFLIERRSW) the chain is Cytoplasmic. The helical transmembrane segment at 13–33 (IAAFLFQQALMLFIAFVDPSI) threads the bilayer. Residue Ser34 is a topological domain, extracellular. The helical transmembrane segment at 35-55 (FGNVLYMVYLCILFFIIFLWF) threads the bilayer. Residues 56–334 (RYRKETAFYK…RNQFEHVISV (279 aa)) lie on the Cytoplasmic side of the membrane. The Histidine kinase domain maps to 121–326 (AWIHEVKTPL…VFTLTFPIRN (206 aa)). The residue at position 124 (His124) is a Phosphohistidine; by autocatalysis.

The protein resides in the cell membrane. It catalyses the reaction ATP + protein L-histidine = ADP + protein N-phospho-L-histidine.. In terms of biological role, member of the two-component regulatory system BceS/BceR involved in the regulation of bacitracin resistance. Activates BceR in response to extracellular bacitracin. The chain is Sensor protein BceS (bceS) from Bacillus subtilis (strain 168).